Reading from the N-terminus, the 230-residue chain is MSEEVVESSSQEASQVIPQEQEDWADDVVTTMPAQEVTEWPEIKLFGRWACDDISISDISLQDYIAVKEKFARYLPHSAGRYAAKRFRKAQCPIVERLTSGLMMKGRSNGKKLLACRIVKHAFEIIHLLTSENPLQVTVNAIVNSGPREDSTRIGRAGTVRRQAVDVSPLRRVNQAIWLICTGAREAAFRNIKTVAECLADELINAAKGSSNSYAIKKKDELERVAKSNR.

Residues 1 to 22 (MSEEVVESSSQEASQVIPQEQE) form a disordered region. Over residues 7 to 16 (ESSSQEASQV) the composition is skewed to low complexity.

This sequence belongs to the universal ribosomal protein uS7 family.

This chain is Small ribosomal subunit protein uS7B (RpS5b), found in Drosophila melanogaster (Fruit fly).